The chain runs to 170 residues: Large ribosomal subunit protein uL10 (170 aa).

It belongs to the universal ribosomal protein uL10 family. In terms of assembly, part of the ribosomal stalk of the 50S ribosomal subunit. The N-terminus interacts with L11 and the large rRNA to form the base of the stalk. The C-terminus forms an elongated spine to which L12 dimers bind in a sequential fashion forming a multimeric L10(L12)X complex.

Forms part of the ribosomal stalk, playing a central role in the interaction of the ribosome with GTP-bound translation factors. The sequence is that of Large ribosomal subunit protein uL10 from Lactobacillus helveticus (strain DPC 4571).